A 236-amino-acid chain; its full sequence is Orotidine 5'-phosphate decarboxylase (236 aa).

Residues Asp17, Lys39, 66–75 (DLKFHDIPNT), Thr125, Arg186, Gln195, Gly215, and Arg216 each bind substrate. Lys68 acts as the Proton donor in catalysis.

This sequence belongs to the OMP decarboxylase family. Type 1 subfamily. As to quaternary structure, homodimer.

The enzyme catalyses orotidine 5'-phosphate + H(+) = UMP + CO2. The protein operates within pyrimidine metabolism; UMP biosynthesis via de novo pathway; UMP from orotate: step 2/2. Catalyzes the decarboxylation of orotidine 5'-monophosphate (OMP) to uridine 5'-monophosphate (UMP). In Buchnera aphidicola subsp. Acyrthosiphon pisum (strain APS) (Acyrthosiphon pisum symbiotic bacterium), this protein is Orotidine 5'-phosphate decarboxylase.